The primary structure comprises 450 residues: MEPRVGNKFRLGRKIGSGSFGEIYLGTNIHTNEELAIKLENVKTKHPQLLYESKLYRILQGGTGVPNVKWFGVEGDYNVLVMDLLGPSLEDLFNFCSRKLSLKSVLMLADQMINRVEFFHSKSFLHRDLKPDNFLMGLGRRANQVYIIDFGLAKKYRDSTTHQHIPYRENKNLTGTARYASMNTHLGIEQSRRDDLESLGYILMYFLKGSLPWQGLKAGTKKQKYERISEKKVSTSIEALCRGYPSEFASYFHYCRSLRFDDKPDYAYLKRIFRDLFIREGFQFDYVFDWTILKYQQSQLTAPPSRALNPAVGTSAALPPGISNIDRYTGEEEGRPHMESSRRRVSGALDNSGNISNQPTSSSARDSMIPSSSLFAQSAGSSRRVTAVSGSRDNFPGSEELLQRSRTGDVSRGVIPRNSPGEAGKSTRRHYESVVKGIDNLQVSDEHHPH.

A Protein kinase domain is found at 9–278 (FRLGRKIGSG…LKRIFRDLFI (270 aa)). Residues 15 to 23 (IGSGSFGEI) and Lys38 contribute to the ATP site. Asp128 functions as the Proton acceptor in the catalytic mechanism. Positions 311-450 (AVGTSAALPP…LQVSDEHHPH (140 aa)) are disordered. Residues 328 to 342 (YTGEEEGRPHMESSR) show a composition bias toward basic and acidic residues. Over residues 349-365 (LDNSGNISNQPTSSSAR) the composition is skewed to polar residues. Low complexity predominate over residues 371-382 (SSSLFAQSAGSS).

This sequence belongs to the protein kinase superfamily. CK1 Ser/Thr protein kinase family. Casein kinase I subfamily. In terms of assembly, monomer. Post-translationally, autophosphorylated. As to expression, expressed in flowers.

The protein localises to the cytoplasm. It is found in the cell junction. The protein resides in the plasmodesma. It catalyses the reaction L-seryl-[protein] + ATP = O-phospho-L-seryl-[protein] + ADP + H(+). The enzyme catalyses L-threonyl-[protein] + ATP = O-phospho-L-threonyl-[protein] + ADP + H(+). Functionally, casein kinases are operationally defined by their preferential utilization of acidic proteins such as caseins as substrates. It can phosphorylate a large number of proteins. The protein is Casein kinase 1-like protein 1 of Arabidopsis thaliana (Mouse-ear cress).